The following is a 3165-amino-acid chain: ORFB polyprotein (3165 aa).

The 148-residue stretch at 271–418 (MARSIGLSHE…LENEPDILVG (148 aa)) folds into the Peptidase C8 domain. Residues cysteine 341 and histidine 388 each act as for papain-like protease p48 activity in the active site. Positions 453–472 (AEPGQRAKDNTNPSTPRPIE) are disordered. The next 6 membrane-spanning stretches (helical) occupy residues 791 to 811 (IMIA…YVPY), 823 to 843 (YILL…GYAC), 1166 to 1186 (AGLF…AAIM), 1193 to 1213 (KYLV…KALW), 1215 to 1235 (FPIF…VSVY), and 1356 to 1376 (ALGF…LRPP). An RNA-directed RNA polymerase region spans residues 1793-2208 (FYKSRKALKQ…AEDSADYRAW (416 aa)). A run of 3 helical transmembrane segments spans residues 2495–2515 (VRIY…MHWV), 2517–2537 (LFIQ…WSFW), and 2590–2610 (LGIV…EVLF). Residues 2651–2796 (ATKAIEHGHV…IPFLEPTLPK (146 aa)) enclose the Helicase ATP-binding domain. Position 2664–2671 (2664–2671 (AKTASGKS)) interacts with ATP. Residues 2751–2754 (DEFH) carry the DEFH box motif.

In the C-terminal section; belongs to the DEAD box helicase family. Papain-like protease p48 is autocatalytically processed. The putative RNA-directed RNA polymerase/helicase may be further processed.

Its subcellular location is the host membrane. The catalysed reaction is RNA(n) + a ribonucleoside 5'-triphosphate = RNA(n+1) + diphosphate. It catalyses the reaction ATP + H2O = ADP + phosphate + H(+). Functionally, papain-like protease p48 is a cysteine protease of the peptidase family C8. The chain is ORFB polyprotein from Cryphonectria hypovirus 1 (strain EP713) (CHV-1/EP713).